A 283-amino-acid chain; its full sequence is Thymidylate synthase (283 aa).

Arginine 22 provides a ligand contact to dUMP. The active-site Nucleophile is cysteine 160. DUMP is bound by residues 180 to 183, asparagine 191, and 221 to 223; these read RSCD and HIY. Aspartate 183 is a (6R)-5,10-methylene-5,6,7,8-tetrahydrofolate binding site. A (6R)-5,10-methylene-5,6,7,8-tetrahydrofolate-binding site is contributed by serine 282.

This sequence belongs to the thymidylate synthase family. Bacterial-type ThyA subfamily. As to quaternary structure, homodimer.

The protein resides in the cytoplasm. It catalyses the reaction dUMP + (6R)-5,10-methylene-5,6,7,8-tetrahydrofolate = 7,8-dihydrofolate + dTMP. It functions in the pathway pyrimidine metabolism; dTTP biosynthesis. Catalyzes the reductive methylation of 2'-deoxyuridine-5'-monophosphate (dUMP) to 2'-deoxythymidine-5'-monophosphate (dTMP) while utilizing 5,10-methylenetetrahydrofolate (mTHF) as the methyl donor and reductant in the reaction, yielding dihydrofolate (DHF) as a by-product. This enzymatic reaction provides an intracellular de novo source of dTMP, an essential precursor for DNA biosynthesis. This is Thymidylate synthase from Photobacterium profundum (strain SS9).